Here is a 335-residue protein sequence, read N- to C-terminus: Tetraacyldisaccharide 4'-kinase (335 aa).

58–65 (TVGGVGKT) is an ATP binding site.

It belongs to the LpxK family.

The enzyme catalyses a lipid A disaccharide + ATP = a lipid IVA + ADP + H(+). Its pathway is glycolipid biosynthesis; lipid IV(A) biosynthesis; lipid IV(A) from (3R)-3-hydroxytetradecanoyl-[acyl-carrier-protein] and UDP-N-acetyl-alpha-D-glucosamine: step 6/6. Its function is as follows. Transfers the gamma-phosphate of ATP to the 4'-position of a tetraacyldisaccharide 1-phosphate intermediate (termed DS-1-P) to form tetraacyldisaccharide 1,4'-bis-phosphate (lipid IVA). This is Tetraacyldisaccharide 4'-kinase from Caulobacter sp. (strain K31).